Reading from the N-terminus, the 314-residue chain is DNA-directed RNA polymerase subunit alpha (314 aa).

An alpha N-terminal domain (alpha-NTD) region spans residues 1–228 (MIEIEKPKIE…EHLNIFVGLT (228 aa)). The segment at 246–314 (EKVLEMTIEE…ELGLGLRKDD (69 aa)) is alpha C-terminal domain (alpha-CTD).

This sequence belongs to the RNA polymerase alpha chain family. Homodimer. The RNAP catalytic core consists of 2 alpha, 1 beta, 1 beta' and 1 omega subunit. When a sigma factor is associated with the core the holoenzyme is formed, which can initiate transcription.

The enzyme catalyses RNA(n) + a ribonucleoside 5'-triphosphate = RNA(n+1) + diphosphate. Functionally, DNA-dependent RNA polymerase catalyzes the transcription of DNA into RNA using the four ribonucleoside triphosphates as substrates. The sequence is that of DNA-directed RNA polymerase subunit alpha from Bacillus pumilus (strain SAFR-032).